Reading from the N-terminus, the 692-residue chain is ABC1 family protein C21C3.03, mitochondrial (692 aa).

The N-terminal 91 residues, 1–91, are a transit peptide targeting the mitochondrion; sequence MISFSHWNSH…RKFTTRQKSE (91 aa). Helical transmembrane passes span 96-116 and 161-181; these read WRIL…LWIL and LFII…ISFL.

Belongs to the protein kinase superfamily. ADCK protein kinase family.

Its subcellular location is the mitochondrion membrane. This Schizosaccharomyces pombe (strain 972 / ATCC 24843) (Fission yeast) protein is ABC1 family protein C21C3.03, mitochondrial.